The primary structure comprises 367 residues: MRTSFVTMLALGAAAVSAAPAAPVTDLVERGSSCTFTTAEAAKAGKGSCSTIVLDNIKVPAGETLDLTKLKSGTQVVFKGETSFGYKEWTGPLVSFSGSNIHVSGAAGHVINGGGPSWWDGKGTNGGKKKPKFFYAHHLDDSTISGLNVKNTPVQGFSILADRLTLDHITIDNSEGDAKGGHNTDAFDVGSSTFITISNANIKNQDDCLAINSGSNIKFVGGTCSGGHGISIGSVGLRDNNIVKDVTISDSTVINSDNGVRVKTIYQATGAVSGVTFSNIKLSNIAKYGIVIEQDYENGSPTGKPTNGVPISELTIENVTGTLKSSATEVYILCGNGSCKNWKWAGNSLSGGKKSGKCGNVPAGASC.

An N-terminal signal peptide occupies residues 1–18 (MRTSFVTMLALGAAAVSA). Cys34 and Cys49 are joined by a disulfide. PbH1 repeat units lie at residues 161-191 (ADRL…DVGS), 192-213 (STFI…AINS), 214-234 (GSNI…SIGS), 243-264 (VKDV…RVKT), and 272-294 (VSGV…VIEQ). Residue Asp206 is the Proton donor of the active site. An intrachain disulfide couples Cys208 to Cys224. His228 is an active-site residue. Residues Asn318 and Asn336 are each glycosylated (N-linked (GlcNAc...) asparagine). 2 cysteine pairs are disulfide-bonded: Cys334/Cys339 and Cys358/Cys367.

The protein belongs to the glycosyl hydrolase 28 family.

The protein resides in the secreted. It catalyses the reaction (1,4-alpha-D-galacturonosyl)n+m + H2O = (1,4-alpha-D-galacturonosyl)n + (1,4-alpha-D-galacturonosyl)m.. The chain is Polygalacturonase (PG1) from Penicillium digitatum (Green mold).